The chain runs to 264 residues: Zinc finger protein CG30 (264 aa).

The RING-type zinc finger occupies 8–63; it reads CNICFSVAEIKNYFLQPIDRLTIIPVLELDTCKHQLCSMCIRKIRKRKKVPCPLCR.

It localises to the host nucleus. Its function is as follows. Plays a role in the proper expression of late and very late genes. This is Zinc finger protein CG30 (CG30) from Autographa californica nuclear polyhedrosis virus (AcMNPV).